Consider the following 238-residue polypeptide: Uridylate kinase (238 aa).

Position 12–15 (12–15 (KLSG)) interacts with ATP. Gly-54 contributes to the UMP binding site. ATP contacts are provided by Gly-55 and Arg-59. Residues Asp-74 and 135 to 142 (TGNPFFTT) contribute to the UMP site. 3 residues coordinate ATP: Thr-162, Tyr-168, and Asp-171.

Belongs to the UMP kinase family. As to quaternary structure, homohexamer.

Its subcellular location is the cytoplasm. The enzyme catalyses UMP + ATP = UDP + ADP. It participates in pyrimidine metabolism; CTP biosynthesis via de novo pathway; UDP from UMP (UMPK route): step 1/1. Inhibited by UTP. In terms of biological role, catalyzes the reversible phosphorylation of UMP to UDP. The sequence is that of Uridylate kinase from Bordetella pertussis (strain Tohama I / ATCC BAA-589 / NCTC 13251).